The primary structure comprises 437 residues: Dihydrofolate synthase/folylpolyglutamate synthase (437 aa).

28–30 (DLG) contacts 7,8-dihydropteroate. 58–61 (GKGT) provides a ligand contact to ATP. Ser82 is a binding site for Mg(2+). 120-123 (TYFE) contacts 7,8-dihydropteroate. Glu144 contacts Mg(2+). 151 to 153 (LDA) contributes to the 7,8-dihydropteroate binding site. His171 serves as a coordination point for Mg(2+). ATP-binding residues include Asn255, Arg287, and Asp316.

The protein belongs to the folylpolyglutamate synthase family. As to quaternary structure, monomer. Mg(2+) serves as cofactor.

It catalyses the reaction 7,8-dihydropteroate + L-glutamate + ATP = 7,8-dihydrofolate + ADP + phosphate + H(+). The catalysed reaction is (6S)-5,6,7,8-tetrahydrofolyl-(gamma-L-Glu)(n) + L-glutamate + ATP = (6S)-5,6,7,8-tetrahydrofolyl-(gamma-L-Glu)(n+1) + ADP + phosphate + H(+). It carries out the reaction 10-formyltetrahydrofolyl-(gamma-L-Glu)(n) + L-glutamate + ATP = 10-formyltetrahydrofolyl-(gamma-L-Glu)(n+1) + ADP + phosphate + H(+). The enzyme catalyses (6R)-5,10-methylenetetrahydrofolyl-(gamma-L-Glu)(n) + L-glutamate + ATP = (6R)-5,10-methylenetetrahydrofolyl-(gamma-L-Glu)(n+1) + ADP + phosphate + H(+). The protein operates within cofactor biosynthesis; tetrahydrofolate biosynthesis; 7,8-dihydrofolate from 2-amino-4-hydroxy-6-hydroxymethyl-7,8-dihydropteridine diphosphate and 4-aminobenzoate: step 2/2. It functions in the pathway cofactor biosynthesis; tetrahydrofolylpolyglutamate biosynthesis. Its function is as follows. Functions in two distinct reactions of the de novo folate biosynthetic pathway. Catalyzes the addition of a glutamate residue to dihydropteroate (7,8-dihydropteroate or H2Pte) to form dihydrofolate (7,8-dihydrofolate monoglutamate or H2Pte-Glu). Also catalyzes successive additions of L-glutamate to tetrahydrofolate or 10-formyltetrahydrofolate or 5,10-methylenetetrahydrofolate, leading to folylpolyglutamate derivatives. This chain is Dihydrofolate synthase/folylpolyglutamate synthase (folC), found in Haemophilus influenzae (strain ATCC 51907 / DSM 11121 / KW20 / Rd).